Reading from the N-terminus, the 406-residue chain is 26S proteasome regulatory subunit 8 (406 aa).

The residue at position 2 (A2) is an N-acetylalanine. S120 carries the post-translational modification Phosphoserine. Residues 186–406 (VLLYGPPGTG…KNMSIKKLWK (221 aa)) form a may mediate interaction with PRPF9 region. 190-197 (GPPGTGKT) is an ATP binding site. Position 222 is an N6-acetyllysine (K222).

This sequence belongs to the AAA ATPase family. Component of the 19S proteasome regulatory particle complex. The 26S proteasome consists of a 20S core particle (CP) and two 19S regulatory subunits (RP). The regulatory particle is made of a lid composed of 9 subunits, a base containing 6 ATPases including PSMC5 and few additional components. Component of a complex with USP49 and RUVBL1. Interacts with PRPF19. Interacts with TRIM5. Interacts with NDC80. Interacts with PAAF1. Interacts, in vitro, with the thyroid hormone receptor (in a thyroid hormone T3-dependent manner) and with retinoid X receptor (RXR). Interacts with ERCC6.

The protein resides in the cytoplasm. It is found in the nucleus. Component of the 26S proteasome, a multiprotein complex involved in the ATP-dependent degradation of ubiquitinated proteins. This complex plays a key role in the maintenance of protein homeostasis by removing misfolded or damaged proteins, which could impair cellular functions, and by removing proteins whose functions are no longer required. Therefore, the proteasome participates in numerous cellular processes, including cell cycle progression, apoptosis, or DNA damage repair. PSMC5 belongs to the heterohexameric ring of AAA (ATPases associated with diverse cellular activities) proteins that unfolds ubiquitinated target proteins that are concurrently translocated into a proteolytic chamber and degraded into peptides. The polypeptide is 26S proteasome regulatory subunit 8 (PSMC5) (Bos taurus (Bovine)).